The chain runs to 385 residues: Hsp70/Hsp90 co-chaperone CNS1 (385 aa).

The interval 1–37 (MSSVNANGGYTKPQKYVPGPGDPELPPQLSEFKDKTS) is disordered. TPR repeat units follow at residues 83–116 (AENF…ECED), 121–154 (ESLY…NPKN), and 155–189 (VKCY…DPEN).

It belongs to the TTC4 family. In terms of assembly, monomer. Component of Hsp70 and Hsp90 chaperone complexes. Interacts (via TPR repeats) with HSC82 and HSP82 (via C-terminal MEEVD pentapeptide). Interacts with CPR7, SSA1 and SPI1.

The protein resides in the cytoplasm. Functionally, co-chaperone that binds to the molecular chaperones Hsp90 (HSC82 and HSP82) and Hsp70 (SSA1). Stimulates SSA1 ATPase activity, but not Hsp90 ATPase activity. Involved in only a subset of Hsp90 functions. In Saccharomyces cerevisiae (strain ATCC 204508 / S288c) (Baker's yeast), this protein is Hsp70/Hsp90 co-chaperone CNS1 (CNS1).